A 279-amino-acid chain; its full sequence is uncharacterized protein (279 aa).

This is an uncharacterized protein from Acanthamoeba polyphaga (Amoeba).